We begin with the raw amino-acid sequence, 482 residues long: Docking protein 1 (482 aa).

M1 carries the post-translational modification N-acetylmethionine. The PH domain occupies A4–F119. S48 carries the phosphoserine modification. Positions E151 to G259 constitute an IRS-type PTB domain. 2 positions are modified to phosphoserine: S269 and S290. The tract at residues S269–G328 is disordered. A phosphotyrosine mark is found at Y295, Y336, Y340, Y361, and Y376. Residues T353–R373 are disordered. Y397 carries the phosphotyrosine; by INSR modification. Residues E398–T482 form a disordered region. Phosphotyrosine is present on Y408. A compositionally biased stretch (pro residues) spans V410–K423. S415 is subject to Phosphoserine. Over residues S432–S459 the composition is skewed to polar residues. The residue at position 450 (Y450) is a Phosphotyrosine.

It belongs to the DOK family. Type A subfamily. Interacts with RasGAP, INPP5D/SHIP1 and ABL1. Interacts directly with phosphorylated ITGB3. Interacts with SRMS (via the SH2 and SH3 domains). In terms of processing, constitutively tyrosine-phosphorylated. Phosphorylated by TEC. Phosphorylated on tyrosine residues by the insulin receptor kinase. Results in the negative regulation of the insulin signaling pathway. Phosphorylated by LYN. Phosphorylated on tyrosine residues by SRMS. In terms of tissue distribution, expressed in lung, spleen, skeletal muscle and kidney.

The protein localises to the cytoplasm. It localises to the nucleus. In terms of biological role, DOK proteins are enzymatically inert adaptor or scaffolding proteins. They provide a docking platform for the assembly of multimolecular signaling complexes. DOK1 appears to be a negative regulator of the insulin signaling pathway. Modulates integrin activation by competing with talin for the same binding site on ITGB3. The protein is Docking protein 1 (Dok1) of Mus musculus (Mouse).